The following is a 335-amino-acid chain: Glyoxylate reductase (335 aa).

Residues methionine 159 to isoleucine 162, serine 181 to serine 183, and threonine 240 to arginine 242 each bind NADP(+). Residues arginine 242 and glutamate 271 contribute to the active site. Histidine 290 functions as the Proton donor in the catalytic mechanism. Histidine 290–alanine 292 contributes to the NADP(+) binding site.

This sequence belongs to the D-isomer specific 2-hydroxyacid dehydrogenase family. GyaR subfamily. As to quaternary structure, homodimer.

The protein resides in the cytoplasm. It carries out the reaction glycolate + NAD(+) = glyoxylate + NADH + H(+). This chain is Glyoxylate reductase, found in Aeropyrum pernix (strain ATCC 700893 / DSM 11879 / JCM 9820 / NBRC 100138 / K1).